The primary structure comprises 199 residues: Copper transport protein CTR4 (199 aa).

The next 2 helical transmembrane spans lie at 62-82 (KGMF…IELI) and 152-172 (AFFV…FIFL).

It belongs to the copper transporter (Ctr) (TC 1.A.56) family. SLC31A subfamily.

Its subcellular location is the membrane. Functionally, required for high affinity copper (probably reduced Cu I) transport into the cell. Plays a role in fungal pathogenesis during host infection. This is Copper transport protein CTR4 from Cryptococcus neoformans var. grubii serotype A (strain H99 / ATCC 208821 / CBS 10515 / FGSC 9487) (Filobasidiella neoformans var. grubii).